Here is a 185-residue protein sequence, read N- to C-terminus: Ribosome-recycling factor (185 aa).

Belongs to the RRF family.

It localises to the cytoplasm. In terms of biological role, responsible for the release of ribosomes from messenger RNA at the termination of protein biosynthesis. May increase the efficiency of translation by recycling ribosomes from one round of translation to another. The protein is Ribosome-recycling factor of Acidothermus cellulolyticus (strain ATCC 43068 / DSM 8971 / 11B).